The chain runs to 880 residues: Lon protease (880 aa).

Positions 1–37 are disordered; it reads MADYNDKNYLLHMSGPDSDTGPGIENEDPRAVENPGH. Residues 27–37 show a composition bias toward basic and acidic residues; sequence EDPRAVENPGH. The Lon N-terminal domain maps to 57–251; that stretch reads LPILPVRDVV…LVNTQLQREV (195 aa). 404–411 is a binding site for ATP; sequence GPPGVGKT. Residues 640 to 821 enclose the Lon proteolytic domain; the sequence is KLMPGMALGL…DELLPLVFEG (182 aa). Catalysis depends on residues Ser727 and Lys770. Gly residues predominate over residues 826–836; the sequence is GGVSGAGQAGD. A disordered region spans residues 826–880; the sequence is GGVSGAGQAGDKGGKSKAAAGKKDVVAARPAKPAAPARRRKDKTEDELPTAEAGA. The segment covering 852 to 861 has biased composition (low complexity); that stretch reads AARPAKPAAP.

It belongs to the peptidase S16 family. Homohexamer. Organized in a ring with a central cavity.

It localises to the cytoplasm. The catalysed reaction is Hydrolysis of proteins in presence of ATP.. In terms of biological role, ATP-dependent serine protease that mediates the selective degradation of mutant and abnormal proteins as well as certain short-lived regulatory proteins. Required for cellular homeostasis and for survival from DNA damage and developmental changes induced by stress. Degrades polypeptides processively to yield small peptide fragments that are 5 to 10 amino acids long. Binds to DNA in a double-stranded, site-specific manner. This Desulfovibrio desulfuricans (strain ATCC 27774 / DSM 6949 / MB) protein is Lon protease.